Consider the following 214-residue polypeptide: Thymidylate kinase (214 aa).

ATP is bound at residue 12 to 19 (GGEGAGKS).

Belongs to the thymidylate kinase family.

The catalysed reaction is dTMP + ATP = dTDP + ADP. In terms of biological role, phosphorylation of dTMP to form dTDP in both de novo and salvage pathways of dTTP synthesis. In Gluconobacter oxydans (strain 621H) (Gluconobacter suboxydans), this protein is Thymidylate kinase.